Reading from the N-terminus, the 632-residue chain is tRNA uridine 5-carboxymethylaminomethyl modification enzyme MnmG (632 aa).

14–19 (GAGHAG) contacts FAD. 273 to 287 (GPRYCPSFEDKIMRF) lines the NAD(+) pocket.

It belongs to the MnmG family. Homodimer. Heterotetramer of two MnmE and two MnmG subunits. FAD is required as a cofactor.

The protein localises to the cytoplasm. NAD-binding protein involved in the addition of a carboxymethylaminomethyl (cmnm) group at the wobble position (U34) of certain tRNAs, forming tRNA-cmnm(5)s(2)U34. In Clostridium novyi (strain NT), this protein is tRNA uridine 5-carboxymethylaminomethyl modification enzyme MnmG.